The primary structure comprises 170 residues: Adenine phosphoribosyltransferase (170 aa).

It belongs to the purine/pyrimidine phosphoribosyltransferase family. Homodimer.

It localises to the cytoplasm. The catalysed reaction is AMP + diphosphate = 5-phospho-alpha-D-ribose 1-diphosphate + adenine. The protein operates within purine metabolism; AMP biosynthesis via salvage pathway; AMP from adenine: step 1/1. Catalyzes a salvage reaction resulting in the formation of AMP, that is energically less costly than de novo synthesis. In Alkaliphilus metalliredigens (strain QYMF), this protein is Adenine phosphoribosyltransferase.